The primary structure comprises 369 residues: Deacetylase EF_0837 (369 aa).

6 residues coordinate Zn(2+): His58, His60, Lys152, His186, His209, and Asp270. N6-carboxylysine is present on Lys152.

It belongs to the metallo-dependent hydrolases superfamily. Atu3266/EF_0837 deacetylase family. Requires Zn(2+) as cofactor.

In terms of biological role, esterase that can catalyze the deacetylation of acetyl-(R)-mandelate, but with very low efficiency (in vitro). The sequence is that of Deacetylase EF_0837 from Enterococcus faecalis (strain ATCC 700802 / V583).